A 378-amino-acid chain; its full sequence is Ribosomal RNA large subunit methyltransferase G (378 aa).

The protein belongs to the methyltransferase superfamily. RlmG family.

The protein localises to the cytoplasm. The catalysed reaction is guanosine(1835) in 23S rRNA + S-adenosyl-L-methionine = N(2)-methylguanosine(1835) in 23S rRNA + S-adenosyl-L-homocysteine + H(+). In terms of biological role, specifically methylates the guanine in position 1835 (m2G1835) of 23S rRNA. The polypeptide is Ribosomal RNA large subunit methyltransferase G (Salmonella dublin (strain CT_02021853)).